Reading from the N-terminus, the 1608-residue chain is Adenylate cyclase type 10 (1608 aa).

2 Guanylate cyclase domains span residues 42–179 and 293–418; these read VLMF…RLAQ and TIVF…ARMM. Residues D47 and I48 each contribute to the Mg(2+) site. Residue 47 to 52 participates in ATP binding; that stretch reads DISGFT. A hydrogencarbonate-binding site is contributed by K95. D99 serves as a coordination point for Mg(2+). D99 and K144 together coordinate ATP. Positions 167, 176, and 337 each coordinate hydrogencarbonate. ATP-binding positions include V406 and 412 to 416; that span reads NIAAR.

It belongs to the adenylyl cyclase class-4/guanylyl cyclase family. Requires Mg(2+) as cofactor. It depends on Mn(2+) as a cofactor. In terms of processing, cleavage may occur to generate the active 48 kDa form. As to expression, detected in testis (at protein level). Preferentially expressed in testis.

The protein localises to the cell membrane. It is found in the cytoplasm. It localises to the cytoskeleton. The protein resides in the perinuclear region. Its subcellular location is the nucleus. The protein localises to the cell projection. It is found in the cilium. It localises to the mitochondrion. It catalyses the reaction ATP = 3',5'-cyclic AMP + diphosphate. Activated by manganese or magnesium ions. In the presence of magnesium ions, the enzyme is activated by bicarbonate. Calcium mildly increases the enzyme activity, also in the presence of magnesium ions. In terms of biological role, catalyzes the formation of the signaling molecule cAMP. May function as sensor that mediates responses to changes in cellular bicarbonate and CO(2) levels. Has a critical role in mammalian spermatogenesis by producing the cAMP which regulates cAMP-responsive nuclear factors indispensable for sperm maturation in the epididymis. Induces capacitation, the maturational process that sperm undergo prior to fertilization. Involved in ciliary beat regulation. In Rattus norvegicus (Rat), this protein is Adenylate cyclase type 10 (Adcy10).